The chain runs to 855 residues: Dynein axonemal assembly factor 5 (855 aa).

A2 carries the post-translational modification N-acetylalanine. HEAT repeat units lie at residues G71 to R109, H202 to G240, K241 to D278, Y280 to K318, F354 to R376, V377 to A414, G599 to D638, R696 to G734, P738 to G776, and Q784 to D822.

It belongs to the DNAAF5 family. As to quaternary structure, interacts with DNAI2; probably involved in outer arm dynein assembly. Expressed in nasal epithelium and lung epithelium by ciliated cells (at protein level).

The protein localises to the cytoplasm. It localises to the dynein axonemal particle. Cytoplasmic protein involved in the delivery of the dynein machinery to the motile cilium. It is required for the assembly of the axonemal dynein inner and outer arms, two structures attached to the peripheral outer doublet A microtubule of the axoneme, that play a crucial role in cilium motility. The polypeptide is Dynein axonemal assembly factor 5 (Homo sapiens (Human)).